The chain runs to 737 residues: Serine/threonine-protein kinase dst1 (737 aa).

The Protein kinase domain occupies 29–281; that stretch reads YHIQERLGKG…AKELLNHEFI (253 aa). ATP is bound by residues 35 to 43 and Lys-58; that span reads LGKGSFGQV. Asp-149 (proton acceptor) is an active-site residue. Disordered regions lie at residues 305–356, 372–475, 491–559, and 575–631; these read SMFE…SNNY, KDDA…TTDQ, KPIT…ISNN, and NNNI…ESLS. 4 stretches are compositionally biased toward low complexity: residues 334–345, 401–410, 425–444, and 454–473; these read NNNTVTNYSTVI, SSCSSSSSSS, PITN…NKIP, and ATTT…STTT. The span at 491–503 shows a compositional bias: polar residues; the sequence is KPITSSNSTSVTP. Residues 510–525 are compositionally biased toward low complexity; the sequence is SNNTTTTSNINTPIKP. Composition is skewed to polar residues over residues 529–554 and 585–596; these read LKKS…TPLK and SPTTGQKIIKTN. Over residues 597-615 the composition is skewed to low complexity; the sequence is SGGVLKSSGGLSSKRSPSS.

It belongs to the protein kinase superfamily. STE Ser/Thr protein kinase family. STE20 subfamily. Requires Mg(2+) as cofactor.

The enzyme catalyses L-seryl-[protein] + ATP = O-phospho-L-seryl-[protein] + ADP + H(+). It carries out the reaction L-threonyl-[protein] + ATP = O-phospho-L-threonyl-[protein] + ADP + H(+). The chain is Serine/threonine-protein kinase dst1 from Dictyostelium discoideum (Social amoeba).